Reading from the N-terminus, the 375-residue chain is Succinyl-diaminopimelate desuccinylase (375 aa).

Residue H66 coordinates Zn(2+). D68 is a catalytic residue. Residue D99 coordinates Zn(2+). E133 acts as the Proton acceptor in catalysis. Positions 134, 162, and 348 each coordinate Zn(2+).

The protein belongs to the peptidase M20A family. DapE subfamily. As to quaternary structure, homodimer. Zn(2+) is required as a cofactor. Requires Co(2+) as cofactor.

It carries out the reaction N-succinyl-(2S,6S)-2,6-diaminopimelate + H2O = (2S,6S)-2,6-diaminopimelate + succinate. It participates in amino-acid biosynthesis; L-lysine biosynthesis via DAP pathway; LL-2,6-diaminopimelate from (S)-tetrahydrodipicolinate (succinylase route): step 3/3. Functionally, catalyzes the hydrolysis of N-succinyl-L,L-diaminopimelic acid (SDAP), forming succinate and LL-2,6-diaminopimelate (DAP), an intermediate involved in the bacterial biosynthesis of lysine and meso-diaminopimelic acid, an essential component of bacterial cell walls. In Shigella sonnei (strain Ss046), this protein is Succinyl-diaminopimelate desuccinylase.